Consider the following 668-residue polypeptide: CLK4-associating serine/arginine rich protein (668 aa).

Phosphoserine is present on S101. 2 disordered regions span residues 173–232 (AEVE…GMAD) and 252–668 (AKAL…HYRH). Residues 182-214 (PEEEESPAEEESNSDEDEVIPDIDVEVDVDELN) show a composition bias toward acidic residues. Residues 265 to 283 (RRSRRQRREFREKRLRGRK) are compositionally biased toward basic residues. 2 positions are modified to phosphoserine: S285 and S294. Positions 290 to 313 (ARRDSPTYDPYKRSPSESSSESRS) are enriched in basic and acidic residues. T327 carries the phosphothreonine modification. 2 positions are modified to phosphoserine: S331 and S335. A compositionally biased stretch (low complexity) spans 340 to 353 (AAAAAAAAASGAAP). The span at 354 to 365 (GKPPAPPQPGGP) shows a compositional bias: pro residues. A compositionally biased stretch (low complexity) spans 378-395 (SSSSASRTSSSRSSSRSS). Residues 396-435 (SRSRRGYYRSGRHARSRSRSWSRSRSRSRRYSRSRSRGRR) show a composition bias toward basic residues. Residues 436–446 (HSDGGSRDGHR) are compositionally biased toward basic and acidic residues. Positions 475–486 (RGARGPRHHSSS) are enriched in basic residues. 2 stretches are compositionally biased toward low complexity: residues 487–510 (HSRSSWSLSPSRSRSLTRSGSRSQ) and 518–527 (QSHSQSQSHS). Residue S541 is modified to Phosphoserine. The residue at position 567 (T567) is a Phosphothreonine. A coiled-coil region spans residues 579–641 (ALNRQFKADK…ERQYSRQSRS (63 aa)). Basic and acidic residues-rich tracts occupy residues 584–611 (FKADKKAAQEKMIQQEHERQEREDELRA) and 619–635 (KERERREKEREEWERQY). A compositionally biased stretch (low complexity) spans 636 to 645 (SRQSRSPSPR). Residues 653-668 (SRRRSRSRSRSPHYRH) show a composition bias toward basic residues.

It belongs to the splicing factor SR family. As to quaternary structure, probably interacts with CLK4. Phosphorylated in vitro by CLK4.

It is found in the nucleus. In terms of biological role, probably functions as an alternative splicing regulator. May regulate the mRNA splicing of genes such as CLK1. May act by regulating members of the CLK kinase family. The polypeptide is CLK4-associating serine/arginine rich protein (Clasrp) (Rattus norvegicus (Rat)).